The primary structure comprises 273 residues: Rho GTPase-activating protein gacB (273 aa).

Residues 1 to 192 (MTDQTLRLEN…YLISHFNEIF (192 aa)) enclose the Rho-GAP domain.

It is found in the cytoplasm. In terms of biological role, rho GTPase-activating protein involved in the signal transduction pathway. This chain is Rho GTPase-activating protein gacB (gacB), found in Dictyostelium discoideum (Social amoeba).